Consider the following 230-residue polypeptide: Ureidoacrylate amidohydrolase RutB (230 aa).

The active-site Proton acceptor is Asp24. Lys133 is an active-site residue. Catalysis depends on Cys166, which acts as the Nucleophile.

The protein belongs to the isochorismatase family. RutB subfamily.

The enzyme catalyses (Z)-3-ureidoacrylate + H2O + H(+) = (Z)-3-aminoacrylate + NH4(+) + CO2. It catalyses the reaction (Z)-3-ureidoacrylate + H2O = (Z)-3-aminoacrylate + carbamate + H(+). The catalysed reaction is (Z)-2-methylureidoacrylate + H2O + H(+) = (Z)-2-methylaminoacrylate + NH4(+) + CO2. In terms of biological role, hydrolyzes ureidoacrylate to form aminoacrylate and carbamate. The carbamate hydrolyzes spontaneously, thereby releasing one of the nitrogen atoms of the pyrimidine ring as ammonia and one of its carbon atoms as CO2. The polypeptide is Ureidoacrylate amidohydrolase RutB (Escherichia coli O103:H2 (strain 12009 / EHEC)).